The following is a 133-amino-acid chain: Small ribosomal subunit protein uS8 (133 aa).

Residues 1-30 (MANHDPISDMLTRIRNASEKRHETTKVPAS) are disordered. Positions 16–25 (NASEKRHETT) are enriched in basic and acidic residues.

Belongs to the universal ribosomal protein uS8 family. Part of the 30S ribosomal subunit. Contacts proteins S5 and S12.

One of the primary rRNA binding proteins, it binds directly to 16S rRNA central domain where it helps coordinate assembly of the platform of the 30S subunit. The protein is Small ribosomal subunit protein uS8 of Synechococcus sp. (strain CC9902).